The sequence spans 342 residues: Holliday junction branch migration complex subunit RuvB (342 aa).

Positions 1–181 are large ATPase domain (RuvB-L); sequence MENRMVTPFD…FGMLCAMEFY (181 aa). Residues L20, R21, G62, K65, T66, T67, 128-130, R171, Y181, and R218 contribute to the ATP site; that span reads EDY. T66 contacts Mg(2+). Residues 182–252 are small ATPAse domain (RuvB-S); it reads TDEELMEIVV…GAKAALDLLE (71 aa). Positions 255–342 are head domain (RuvB-H); that stretch reads KEGLDKIDNK…KDNQVSIFNK (88 aa). DNA contacts are provided by R310 and R315.

The protein belongs to the RuvB family. Homohexamer. Forms an RuvA(8)-RuvB(12)-Holliday junction (HJ) complex. HJ DNA is sandwiched between 2 RuvA tetramers; dsDNA enters through RuvA and exits via RuvB. An RuvB hexamer assembles on each DNA strand where it exits the tetramer. Each RuvB hexamer is contacted by two RuvA subunits (via domain III) on 2 adjacent RuvB subunits; this complex drives branch migration. In the full resolvosome a probable DNA-RuvA(4)-RuvB(12)-RuvC(2) complex forms which resolves the HJ.

Its subcellular location is the cytoplasm. It catalyses the reaction ATP + H2O = ADP + phosphate + H(+). The RuvA-RuvB-RuvC complex processes Holliday junction (HJ) DNA during genetic recombination and DNA repair, while the RuvA-RuvB complex plays an important role in the rescue of blocked DNA replication forks via replication fork reversal (RFR). RuvA specifically binds to HJ cruciform DNA, conferring on it an open structure. The RuvB hexamer acts as an ATP-dependent pump, pulling dsDNA into and through the RuvAB complex. RuvB forms 2 homohexamers on either side of HJ DNA bound by 1 or 2 RuvA tetramers; 4 subunits per hexamer contact DNA at a time. Coordinated motions by a converter formed by DNA-disengaged RuvB subunits stimulates ATP hydrolysis and nucleotide exchange. Immobilization of the converter enables RuvB to convert the ATP-contained energy into a lever motion, pulling 2 nucleotides of DNA out of the RuvA tetramer per ATP hydrolyzed, thus driving DNA branch migration. The RuvB motors rotate together with the DNA substrate, which together with the progressing nucleotide cycle form the mechanistic basis for DNA recombination by continuous HJ branch migration. Branch migration allows RuvC to scan DNA until it finds its consensus sequence, where it cleaves and resolves cruciform DNA. In Clostridium botulinum (strain Loch Maree / Type A3), this protein is Holliday junction branch migration complex subunit RuvB.